The following is a 1022-amino-acid chain: MVTYSMIPQISQAPGLIQRVLTFLETLKAQGFTGDTATSYADRLSLSTDNSIYQLLPDAVLFPRSTADVALIARLAGEAAFSSLVFTPRGGGTGTNGQSLNQGIIVDMSRHMNRILEINTEQRWVRVEAGVVKDQLNAYLKPFGFFFSPELSTSNRATLGGMINTDASGQGSLVYGKTSDHVLGLRAVLLGGDILDTRPVPTALAENLAQTPTPEGRIYQQVLTRCREHRELILEKFPKLNRFLTGYDLRHVFSDDMQTFDLTRLLCGAEGTLAFISEARLDITPLPKVRRVVNIKYDAFDSALRNAPLMVEAQALSVETVDSKVLNLAREDIVWHSVRELITAIPDKEMLGLNIVEFAGDDAGQIDRQITQLCARLDTLMTQQQGGVIGYQLCDDLDGIERIYNMRKKAVGLLGNAKGRAKPIPFVEDTAVPPEHLADYIVEFRALLDSHGLSYGMFGHVDAGVLHVRPALDMCDPHQEMMMKQISDEVVALTARYGGLLWGEHGKGFRAQYSPAFFGETLFNELRRIKAAFDPHNRLNPGKICTPFDSEAAMMQVDATKRGSYDRQIPLQVRETWRGALECNGNGLCFNFDARSPMCPSMKITRNRIHSPKGRATLTREWLRLLAEQGADPVMLEKKLPESSLSLRALISRMRNTWYANKGEYDFSHEVKEAMSGCLACKACSTQCPIKIDVPAFRSRFLQLYHTRYLRPLSDHLVAGVESYAPLMAKAPGVFNFFLKQPWATSFSKTHIGMVDLPLLSSPTLKQQLSGHPAMNMTLEQLEALSETQRAQKVLVVQDPFTSFYEAKLVHDFIRLIEKLGYQPVLLPFSPNGKAQHVKGFLQRFARTASKTADFLNRVAKLGMPMVGIDPATVLCYRDEYHQMLGEARGDFNVLLVHEWLHQALQEREVQVTSGEAWYLFAHCTEVTALPGTPGQWQAIFSRFGAKLENINVGCCGMAGTYGHESQNLENSLGIYALSWHPQLQKLPRQRCLATGFSCRSQVKRVEGNGMRHPLQALLELI.

One can recognise an FAD-binding PCMH-type domain in the interval 53 to 286 (YQLLPDAVLF…SEARLDITPL (234 aa)). Arg-407 and His-505 together coordinate (R)-2-hydroxyglutarate. The 4Fe-4S ferredoxin-type domain maps to 667–700 (FSHEVKEAMSGCLACKACSTQCPIKIDVPAFRSR). [4Fe-4S] cluster-binding residues include Cys-678, Cys-681, Cys-684, and Cys-688.

The protein in the N-terminal section; belongs to the FAD-binding oxidoreductase/transferase type 4 family. Homotetramer. [4Fe-4S] cluster is required as a cofactor. FAD serves as cofactor.

It catalyses the reaction (R)-2-hydroxyglutarate + A = 2-oxoglutarate + AH2. Its activity is regulated as follows. Activity is completely inhibited by the addition of 0.5 mM Mn(2+), Ni(2+), or Co(2+) and partially inhibited by 0.5 mM Zn(2+). Its function is as follows. Catalyzes the oxidation of D-2-hydroxyglutarate (D-2-HGA) to 2-oxoglutarate. Appears to be the only D2HGDH in P.ananatis, providing the way to recycle D-2-HGA produced during L-serine synthesis by SerA, by converting it back to 2-oxoglutarate. Is involved in the utilization of D-2-HGA, that can support the growth of P.ananatis as a sole carbon source, although it barely serves as a good substrate. The physiological molecule that functions as the primary electron acceptor during D-2-HGA oxidation by YdiJ in P.ananatis is unknown. Shows strict substrate specificity towards D-2-HGA, since it has no detectable activity on L-2-hydroxyglutarate, L-malate, D-malate, L-lactate, D-lactate, L-tartrate, D-tartrate, L-glycerate, D-glycerate, glutarate, or pyruvate. This is D-2-hydroxyglutarate dehydrogenase from Pantoea ananatis (strain AJ13355).